A 289-amino-acid polypeptide reads, in one-letter code: 4-hydroxy-tetrahydrodipicolinate synthase (289 aa).

Thr44 contacts pyruvate. Tyr130 functions as the Proton donor/acceptor in the catalytic mechanism. Lys158 acts as the Schiff-base intermediate with substrate in catalysis. Position 200 (Ile200) interacts with pyruvate.

It belongs to the DapA family. Homotetramer; dimer of dimers.

Its subcellular location is the cytoplasm. It catalyses the reaction L-aspartate 4-semialdehyde + pyruvate = (2S,4S)-4-hydroxy-2,3,4,5-tetrahydrodipicolinate + H2O + H(+). Its pathway is amino-acid biosynthesis; L-lysine biosynthesis via DAP pathway; (S)-tetrahydrodipicolinate from L-aspartate: step 3/4. Functionally, catalyzes the condensation of (S)-aspartate-beta-semialdehyde [(S)-ASA] and pyruvate to 4-hydroxy-tetrahydrodipicolinate (HTPA). The protein is 4-hydroxy-tetrahydrodipicolinate synthase of Archaeoglobus fulgidus (strain ATCC 49558 / DSM 4304 / JCM 9628 / NBRC 100126 / VC-16).